The sequence spans 512 residues: MRHLSSPPWPLLLLLLLSSFTSGESSLSAEKNKLHTGGLSRQSFPKGFVFGTATSAYQVEGETHQDGRGPSIWDAFVKIPGKIAKNATAEITVDQYHRYKEDVDLMKKLNFDAYRFSISWSRIFPEGSGKVNWKGVAYYNRLIDYMVQKGITPYANLYHYDLPLALENKYKGLLGRQVVKDFADYAEFCYKTFGDRVKNWMTFNEPRVVAALGYDNGIFAPGRCSKAFGNCTEGNSATEPYIVTHHLILAHAAAVQRYRKYYQAKQKGRVGILLDFVWYEPLTRSKADNLAAQRARDFHIGWFIHPLVYGEYPKTMQNIVKERLPKFTEKEVKMVKGSIDFVGINQYTTYYMSEPHPTTKPKDLGYQQDWNVEFGFAKLGKPIGPRAYSSWLYNVPWGMYKALMYMKERYGNPTMILSENGMDDPGNVTLAQGLHDTTRIKYYKDYLTNLKKARDDGANVVGYFAWSLLDNFEWLSGYTSRFGIVYVDYKTLKRYPKMSAQWFKQLLKRNNK.

The first 23 residues, 1 to 23, serve as a signal peptide directing secretion; that stretch reads MRHLSSPPWPLLLLLLLSSFTSG. Gln-58 is a binding site for a beta-D-glucoside. The N-linked (GlcNAc...) asparagine glycan is linked to Asn-86. A beta-D-glucoside-binding positions include His-159 and 204–205; that span reads NE. The Proton donor role is filled by Glu-205. Cys-224 and Cys-231 are joined by a disulfide. A glycan (N-linked (GlcNAc...) asparagine) is linked at Asn-230. The a beta-D-glucoside site is built by Tyr-347 and Glu-419. Glu-419 serves as the catalytic Nucleophile. N-linked (GlcNAc...) asparagine glycosylation is present at Asn-427. A beta-D-glucoside-binding positions include Trp-466, 473 to 474, and Phe-482; that span reads EW.

It belongs to the glycosyl hydrolase 1 family. Homodimer.

It is found in the secreted. It carries out the reaction Hydrolysis of terminal, non-reducing beta-D-glucosyl residues with release of beta-D-glucose.. In terms of biological role, hydrolyzes p-nitrophenyl beta-D-glucoside, p-nitrophenyl beta-D-mannoside, cellobiose, 4-methylumbelliferyl-beta-D-glucoside, laminarin, amygdalin, esculin and gentiobiose. This Arabidopsis thaliana (Mouse-ear cress) protein is Beta-glucosidase 44.